The sequence spans 158 residues: Cyclic pyranopterin monophosphate synthase (158 aa).

Residues 75-77 (LCH) and 113-114 (ME) each bind substrate. The active site involves Asp-128.

It belongs to the MoaC family. Homohexamer; trimer of dimers.

The catalysed reaction is (8S)-3',8-cyclo-7,8-dihydroguanosine 5'-triphosphate = cyclic pyranopterin phosphate + diphosphate. It functions in the pathway cofactor biosynthesis; molybdopterin biosynthesis. Catalyzes the conversion of (8S)-3',8-cyclo-7,8-dihydroguanosine 5'-triphosphate to cyclic pyranopterin monophosphate (cPMP). The polypeptide is Cyclic pyranopterin monophosphate synthase (Paraburkholderia phytofirmans (strain DSM 17436 / LMG 22146 / PsJN) (Burkholderia phytofirmans)).